The chain runs to 420 residues: Vasopressin V1a receptor (420 aa).

The segment at 1 to 20 is disordered; it reads MSFPRGSYDPAASNSSPWWP. Residues 1–54 lie on the Extracellular side of the membrane; the sequence is MSFPRGSYDPAASNSSPWWPLSAEDANSSWEAAGHQKGSDPSGDVRNEELAKLE. Residue asparagine 27 is glycosylated (N-linked (GlcNAc...) asparagine). Residues 55 to 75 form a helical membrane-spanning segment; sequence IAVLAVIFVVAVLGNSSVLLA. The Cytoplasmic segment spans residues 76–92; it reads LHRTPRKTSRMHLFIRH. Residues 93-113 traverse the membrane as a helical segment; the sequence is LSLADLAVAFFQVLPQLCWDI. At 114 to 125 the chain is on the extracellular side; it reads TYRFRGPDWLCR. A disulfide bridge connects residues cysteine 124 and cysteine 205. The chain crosses the membrane as a helical span at residues 126-146; it reads VVKHLQVFAMFASAYMLVVMT. Topologically, residues 147–168 are cytoplasmic; it reads ADRYIAVCHPLKTLQQPTRRSR. A helical membrane pass occupies residues 169–189; sequence LMIAASWVLSFLLSTPQYFIF. Topologically, residues 190-225 are extracellular; that stretch reads SMIEIEVNNGTKTQDCWATFIQPWGTRAYVTWMTSG. Asparagine 198 is a glycosylation site (N-linked (GlcNAc...) asparagine). Residues 226 to 246 form a helical membrane-spanning segment; the sequence is VFVVPVVILGTCYGFICYHIW. At 247-294 the chain is on the cytoplasmic side; that stretch reads RNVRGKTASRQSKGSGEDVAPFHKGLLVTPCVSSVKTISRAKIRTVKM. A helical transmembrane segment spans residues 295-315; it reads TFVIVTAYILCWAPFFIVQMW. The Extracellular portion of the chain corresponds to 316 to 331; it reads SVWDDNFIWTDSENPS. The helical transmembrane segment at 332-352 threads the bilayer; that stretch reads ITITALLASLNSCCNPWIYMF. The Cytoplasmic segment spans residues 353–420; the sequence is FSGHLLQDCV…RSIRFIPVST (68 aa). S-palmitoyl cysteine attachment occurs at residues cysteine 367 and cysteine 368. The interval 379-411 is disordered; it reads DSDNMSRRHTSYSNNRSPTNSTGTWKDSPKSSR. Positions 389-403 are enriched in polar residues; that stretch reads SYSNNRSPTNSTGTW. The residue at position 406 (serine 406) is a Phosphoserine.

Belongs to the G-protein coupled receptor 1 family. Vasopressin/oxytocin receptor subfamily.

The protein resides in the cell membrane. Receptor for arginine vasopressin. The activity of this receptor is mediated by G proteins which activate a phosphatidyl-inositol-calcium second messenger system. Involved in social memory formation. In Microtus ochrogaster (Prairie vole), this protein is Vasopressin V1a receptor (Avpr1a).